The following is a 150-amino-acid chain: Transcriptional regulator MraZ (150 aa).

SpoVT-AbrB domains lie at 7–58 and 87–130; these read KEQH…EPEI and LDSV…SPEK.

It belongs to the MraZ family. Forms oligomers.

The protein localises to the cytoplasm. Its subcellular location is the nucleoid. The protein is Transcriptional regulator MraZ of Chlorobium phaeobacteroides (strain BS1).